The primary structure comprises 224 residues: UPF0758 protein AFE_0358 (224 aa).

An MPN domain is found at 102–224 (GLDSPLRVRQ…PLSLREQGGW (123 aa)). H173, H175, and D186 together coordinate Zn(2+). Positions 173–186 (HNHPSGVAEPSAAD) match the JAMM motif motif.

This sequence belongs to the UPF0758 family.

The chain is UPF0758 protein AFE_0358 from Acidithiobacillus ferrooxidans (strain ATCC 23270 / DSM 14882 / CIP 104768 / NCIMB 8455) (Ferrobacillus ferrooxidans (strain ATCC 23270)).